The following is a 273-amino-acid chain: Homeobox protein HMX2 (273 aa).

Residues M1–T152 are disordered. Positions K93–G102 are enriched in gly residues. A compositionally biased stretch (basic and acidic residues) spans S114 to L123. The segment at residues K149 to L208 is a DNA-binding region (homeobox).

It belongs to the HMX homeobox family.

The protein resides in the nucleus. Transcription factor involved in specification of neuronal cell types and which is required for inner ear and hypothalamus development. This chain is Homeobox protein HMX2 (HMX2), found in Homo sapiens (Human).